The following is a 402-amino-acid chain: MSRVSQARNLGKYFLLIDNMLVVLGFFVVFPLISIRFVDQMGWAAVMVGIALGLRQFIQQGLGIFGGAIADRFGAKPMIVTGMLMRAAGFATMGIAHEPWLLWFSCFLSGLGGTLFDPPRSALVVKLIRPEQRGRFFSLLMMQDSAGAVIGALLGSWLLQYDFRLVCATGAILFILCALFNAWLLPAWKLSTVRTPVREGMRRVMSDKRFVTYVLTLAGYYMLAVQVMLMLPIMVNDIAGSPAAVKWMYAIEACLSLTLLYPIARWSEKRFRLEHRLMAGLLVMSLSMLPIGMVGNLQQLFTLICAFYIGSVIAEPARETLSASLADARARGSYMGFSRLGLAIGGAIGYIGGGWLFDMGKALAQPELPWMMLGIIGFITFLALGWQFSHKRTPRRMLEPGA.

At Met1 to Lys12 the chain is on the cytoplasmic side. A helical transmembrane segment spans residues Tyr13–Ile33. The Periplasmic segment spans residues Ser34–Glu98. A helical transmembrane segment spans residues Pro99–Phe116. Residues Asp117–Ser138 are Cytoplasmic-facing. A helical membrane pass occupies residues Leu139–Leu159. Residues Gln160–Arg164 are Periplasmic-facing. The helical transmembrane segment at Leu165–Leu185 threads the bilayer. Residues Pro186–Tyr213 are Cytoplasmic-facing. A helical membrane pass occupies residues Val214 to Met234. Residues Val235 to Ala243 lie on the Periplasmic side of the membrane. A helical membrane pass occupies residues Ala244 to Ala264. Residues Arg265 to Arg276 are Cytoplasmic-facing. A helical membrane pass occupies residues Leu277 to Leu297. Residues Gln298–Gln299 are Periplasmic-facing. A helical transmembrane segment spans residues Leu300 to Thr320. The Cytoplasmic segment spans residues Leu321 to Arg339. Residues Leu340–Gly360 traverse the membrane as a helical segment. At Lys361–Glu367 the chain is on the periplasmic side. A helical transmembrane segment spans residues Leu368–Phe388. The Cytoplasmic portion of the chain corresponds to Ser389–Ala402.

Belongs to the major facilitator superfamily. DHA1 family. MdtH (TC 2.A.1.2.21) subfamily.

It localises to the cell inner membrane. This Salmonella agona (strain SL483) protein is Multidrug resistance protein MdtH.